We begin with the raw amino-acid sequence, 349 residues long: Flavonol synthase/flavanone 3-hydroxylase (349 aa).

The 98-residue stretch at 213-310 (DIVYMLKINY…RMSWPVFLEP (98 aa)) folds into the Fe2OG dioxygenase domain. Residues His238, Asp240, and His291 each coordinate Fe cation.

The protein belongs to the iron/ascorbate-dependent oxidoreductase family. Fe cation is required as a cofactor. Requires L-ascorbate as cofactor.

Its subcellular location is the cytoplasm. It carries out the reaction a (2R,3R)-dihydroflavonol + 2-oxoglutarate + O2 = a flavonol + succinate + CO2 + H2O. The enzyme catalyses a (2S)-flavan-4-one + 2-oxoglutarate + O2 = a (2R,3R)-dihydroflavonol + succinate + CO2. Its pathway is secondary metabolite biosynthesis; flavonoid biosynthesis. Its function is as follows. Catalyzes the formation of flavonols from dihydroflavonols. It can act on dihydrokaempferol to produce kaempferol, on dihydroquercetin to produce quercitin and on dihydromyricetin to produce myricetin. The protein is Flavonol synthase/flavanone 3-hydroxylase of Solanum tuberosum (Potato).